We begin with the raw amino-acid sequence, 997 residues long: Mannuronan C5-epimerase AlgE5 (997 aa).

7 PbH1 repeats span residues 133 to 155 (DRDVTLERVEIREMSGYGFDPHE), 157 to 179 (TINLTIRDSVAHDNGLDGFVADF), 180 to 202 (QIGGVFENNVSYNNDRHGFNIVT), 204 to 226 (TNDFVLSNNVAYGNGGAGLVIQR), 257 to 279 (AHDVTLQNAEIYGNGLYGVRVYG), 280 to 315 (AEDVQILDNYIHDNSQSGSYAEILLQSYDDTAGVSG), and 320 to 359 (TTGTWIEGNTIVGSANSTYGIQERADGTDYSSLYANSVSN). Hemolysin-type calcium-binding repeat units follow at residues 388 to 403 (GTTGNDTLTGSEAHET), 406 to 422 (GLDGNDRLNGGAGNDIL), 424 to 439 (GGAGRDNLTGGAGADL), 557 to 573 (GHAGNDTLDGAGGDDIL), 574 to 590 (VGGAGRDTLTGGAGADL), 695 to 709 (GSAGNDSLQGTAADE), 712 to 729 (HGGAGRDTLSGGAGADVF), 828 to 839 (GSDGNDTLDGGS), 846 to 862 (GGAGNDSLDGGAGNDIL), and 864 to 880 (GGAGRDTLSGGSGSDIF).

The protein belongs to the D-mannuronate C5-epimerase family. Requires Ca(2+) as cofactor.

The protein localises to the secreted. It catalyses the reaction [(1-&gt;4)-beta-D-mannuronosyl](n) = [alginate](n). Its pathway is glycan biosynthesis; alginate biosynthesis. With respect to regulation, inhibited by zinc. Converts beta-D-mannuronic acid (M) to alpha-L-guluronic acid (G), producing a polymer with gel-forming capacity, required for the formation of the cyst coat. In Azotobacter vinelandii, this protein is Mannuronan C5-epimerase AlgE5.